Reading from the N-terminus, the 577-residue chain is Arginine--tRNA ligase (577 aa).

The 'HIGH' region motif lies at 122–132 (PNVAKEMHVGH).

This sequence belongs to the class-I aminoacyl-tRNA synthetase family. As to quaternary structure, monomer.

It localises to the cytoplasm. The enzyme catalyses tRNA(Arg) + L-arginine + ATP = L-arginyl-tRNA(Arg) + AMP + diphosphate. The sequence is that of Arginine--tRNA ligase from Histophilus somni (strain 2336) (Haemophilus somnus).